A 357-amino-acid polypeptide reads, in one-letter code: tRNA-specific 2-thiouridylase MnmA (357 aa).

Residues 11–18 (AMSGGVDS) and Leu37 each bind ATP. Residue Cys102 is the Nucleophile of the active site. Cys102 and Cys197 are oxidised to a cystine. Gly126 provides a ligand contact to ATP. Residues 148–150 (KDQ) are interaction with tRNA. The active-site Cysteine persulfide intermediate is Cys197. Residues 301–302 (RY) are interaction with tRNA.

It belongs to the MnmA/TRMU family.

It is found in the cytoplasm. The enzyme catalyses S-sulfanyl-L-cysteinyl-[protein] + uridine(34) in tRNA + AH2 + ATP = 2-thiouridine(34) in tRNA + L-cysteinyl-[protein] + A + AMP + diphosphate + H(+). In terms of biological role, catalyzes the 2-thiolation of uridine at the wobble position (U34) of tRNA, leading to the formation of s(2)U34. In Dehalococcoides mccartyi (strain ATCC BAA-2266 / KCTC 15142 / 195) (Dehalococcoides ethenogenes (strain 195)), this protein is tRNA-specific 2-thiouridylase MnmA.